A 347-amino-acid polypeptide reads, in one-letter code: Syntaxin-32 (347 aa).

Residues 1-325 (MSARHGQSSY…RYLNSISSNR (325 aa)) lie on the Cytoplasmic side of the membrane. Disordered stretches follow at residues 172-191 (HESR…TNPF) and 208-251 (PLPW…QQMV). Composition is skewed to polar residues over residues 177–191 (QLFS…TNPF) and 213–222 (NGSSSSSSQL). A compositionally biased stretch (low complexity) spans 237 to 249 (QQSQQQQQQQQQQ). Residues 255–317 (DTYMQGRAEA…EGAQSQLARY (63 aa)) enclose the t-SNARE coiled-coil homology domain. The helical; Anchor for type IV membrane protein transmembrane segment at 326 to 346 (WLMMKIFFVLIAFLMIFLFFV) threads the bilayer. Position 347 (A347) is a topological domain, vesicular.

It belongs to the syntaxin family. Part of the t-SNARE complex.

Its subcellular location is the golgi apparatus. The protein localises to the cis-Golgi network membrane. Vesicle trafficking protein that functions in the secretory pathway. This Arabidopsis thaliana (Mouse-ear cress) protein is Syntaxin-32 (SYP32).